The sequence spans 178 residues: Caveolin-1 (178 aa).

Serine 2 carries the post-translational modification N-acetylserine. Serine 2 carries the phosphoserine modification. A required for homooligomerization region spans residues serine 2 to valine 94. Residues serine 2–serine 104 lie on the Cytoplasmic side of the membrane. Lysine 5 is subject to N6-acetyllysine; alternate. Lysine 5 is covalently cross-linked (Glycyl lysine isopeptide (Lys-Gly) (interchain with G-Cter in ubiquitin); alternate). A Phosphotyrosine modification is found at tyrosine 6. Serine 9 carries the post-translational modification Phosphoserine. Tyrosine 14 carries the post-translational modification Phosphotyrosine; by ABL1. A Phosphotyrosine modification is found at tyrosine 25. Residues lysine 26 and lysine 30 each participate in a glycyl lysine isopeptide (Lys-Gly) (interchain with G-Cter in ubiquitin) cross-link. The residue at position 37 (serine 37) is a Phosphoserine. Residues lysine 39, lysine 47, and lysine 57 each participate in a glycyl lysine isopeptide (Lys-Gly) (interchain with G-Cter in ubiquitin) cross-link. An interaction with CAVIN3 region spans residues aspartate 82–valine 94. The helical intramembrane region spans alanine 105 to leucine 125. Residues histidine 126 to threonine 178 lie on the Cytoplasmic side of the membrane. An interacts with SPRY1, SPRY2, SPRY3 and SPRY4 region spans residues valine 131 to glutamine 142. 3 S-palmitoyl cysteine lipidation sites follow: cysteine 133, cysteine 143, and cysteine 156. The interacts with SPRY1, SPRY2, and SPRY4 stretch occupies residues serine 149–phenylalanine 160. Residues phenylalanine 167–threonine 178 form an interacts with SPRY1, SPRY2, SPRY3 and SPRY4 region.

It belongs to the caveolin family. As to quaternary structure, homooligomer. Interacts with BMX, BTK, GLIPR2, NOSTRIN, SNAP25 and STX1A. Interacts with PACSIN2; this interaction induces membrane tubulation. Interacts (via the N-terminus) with DPP4; the interaction is direct. Interacts with SLC7A9. Interacts with CTNNB1, CDH1 and JUP. Interacts with TGFBR1. Interacts with CAVIN3 (via leucine-zipper domain) in a cholesterol-sensitive manner. Interacts with CAVIN1. Interacts with EHD2 in a cholesterol-dependent manner. Forms a ternary complex with UBXN6 and VCP; mediates CAV1 targeting to lysosomes for degradation. Interacts with ABCG1; this interaction regulates ABCG1-mediated cholesterol efflux. Interacts with NEU3; this interaction enhances NEU3 sialidase activity within caveola. Interacts (via C-terminus) with SPRY1, SPRY2 (via C-terminus), SPRY3, and SPRY4. Interacts with IGFBP5; this interaction allows trafficking of IGFBP5 from the plasma membrane to the nucleus. Phosphorylation of isoform Beta on serine residues is constitutive. Phosphorylated at Tyr-14 by ABL1 in response to oxidative stress. Post-translationally, ubiquitinated. Undergo monoubiquitination and multi- and/or polyubiquitination. Monoubiquitination of N-terminal lysines promotes integration in a ternary complex with UBXN6 and VCP which promotes oligomeric CAV1 targeting to lysosomes for degradation. Ubiquitinated by ZNRF1; leading to degradation and modulation of the TLR4-mediated immune response.

The protein localises to the golgi apparatus membrane. It is found in the cell membrane. The protein resides in the membrane. Its subcellular location is the caveola. It localises to the membrane raft. The protein localises to the golgi apparatus. It is found in the trans-Golgi network. Its function is as follows. May act as a scaffolding protein within caveolar membranes. Forms a stable heterooligomeric complex with CAV2 that targets to lipid rafts and drives caveolae formation. Mediates the recruitment of CAVIN proteins (CAVIN1/2/3/4) to the caveolae. Interacts directly with G-protein alpha subunits and can functionally regulate their activity. Involved in the costimulatory signal essential for T-cell receptor (TCR)-mediated T-cell activation. Its binding to DPP4 induces T-cell proliferation and NF-kappa-B activation in a T-cell receptor/CD3-dependent manner. Recruits CTNNB1 to caveolar membranes and may regulate CTNNB1-mediated signaling through the Wnt pathway. Negatively regulates TGFB1-mediated activation of SMAD2/3 by mediating the internalization of TGFBR1 from membrane rafts leading to its subsequent degradation. Binds 20(S)-hydroxycholesterol (20(S)-OHC). The protein is Caveolin-1 (CAV1) of Canis lupus familiaris (Dog).